An 81-amino-acid polypeptide reads, in one-letter code: Photosystem I iron-sulfur center (81 aa).

2 4Fe-4S ferredoxin-type domains span residues 2–31 (AHSVKIYATCIGCTQCVRACPTDVLEMVPW) and 39–68 (IASAPRTEDCVGCKRCESACPTDFLSVRVY). Residues Cys-11, Cys-14, Cys-17, Cys-21, Cys-48, Cys-51, Cys-54, and Cys-58 each contribute to the [4Fe-4S] cluster site.

The eukaryotic PSI reaction center is composed of at least 11 subunits. [4Fe-4S] cluster serves as cofactor.

The protein localises to the plastid. It localises to the chloroplast thylakoid membrane. The catalysed reaction is reduced [plastocyanin] + hnu + oxidized [2Fe-2S]-[ferredoxin] = oxidized [plastocyanin] + reduced [2Fe-2S]-[ferredoxin]. Apoprotein for the two 4Fe-4S centers FA and FB of photosystem I (PSI); essential for photochemical activity. FB is the terminal electron acceptor of PSI, donating electrons to ferredoxin. The C-terminus interacts with PsaA/B/D and helps assemble the protein into the PSI complex. Required for binding of PsaD and PsaE to PSI. PSI is a plastocyanin-ferredoxin oxidoreductase, converting photonic excitation into a charge separation, which transfers an electron from the donor P700 chlorophyll pair to the spectroscopically characterized acceptors A0, A1, FX, FA and FB in turn. The sequence is that of Photosystem I iron-sulfur center from Mesostigma viride (Green alga).